A 178-amino-acid chain; its full sequence is Hypoxanthine phosphoribosyltransferase (178 aa).

The diphosphate site is built by arginine 43 and glycine 44. Residue glutamate 99 participates in GMP binding. An IMP-binding site is contributed by glutamate 99. Residues glutamate 99 and aspartate 100 each coordinate Mg(2+). Catalysis depends on aspartate 103, which acts as the Proton acceptor. GMP is bound by residues 103–108, lysine 131, and aspartate 159; that span reads DSGNTL. Residues 103 to 108 and lysine 131 contribute to the IMP site; that span reads DSGNTL. Arginine 165 provides a ligand contact to diphosphate.

Belongs to the purine/pyrimidine phosphoribosyltransferase family. Homotetramer. It depends on Mg(2+) as a cofactor.

It localises to the cytoplasm. It catalyses the reaction IMP + diphosphate = hypoxanthine + 5-phospho-alpha-D-ribose 1-diphosphate. The catalysed reaction is GMP + diphosphate = guanine + 5-phospho-alpha-D-ribose 1-diphosphate. It functions in the pathway purine metabolism; IMP biosynthesis via salvage pathway; IMP from hypoxanthine: step 1/1. Functionally, purine salvage pathway enzyme which catalyzes the transfer of the ribosyl-5-phosphate group from 5-phospho-alpha-D-ribose 1-diphosphate (PRPP) to the N9 position of hypoxanthine to yield IMP (inosine 5'-monophosphate). To a lesser extent, can also act on guanine leading to GMP, but shows a highly less efficient activity with xanthine. In Salmonella typhimurium (strain LT2 / SGSC1412 / ATCC 700720), this protein is Hypoxanthine phosphoribosyltransferase (hpt).